A 377-amino-acid chain; its full sequence is UPF0754 membrane protein GTNG_0550 (377 aa).

The next 2 helical transmembrane spans lie at 7–27 and 357–377; these read LLFMMAVGALIGGMTNFIAIV and YLGALLGAMIGAVQGIIGLWL.

The protein belongs to the UPF0754 family.

The protein resides in the cell membrane. This is UPF0754 membrane protein GTNG_0550 from Geobacillus thermodenitrificans (strain NG80-2).